We begin with the raw amino-acid sequence, 104 residues long: Large ribosomal subunit protein uL24 (104 aa).

Belongs to the universal ribosomal protein uL24 family. In terms of assembly, part of the 50S ribosomal subunit.

Functionally, one of two assembly initiator proteins, it binds directly to the 5'-end of the 23S rRNA, where it nucleates assembly of the 50S subunit. Its function is as follows. One of the proteins that surrounds the polypeptide exit tunnel on the outside of the subunit. This chain is Large ribosomal subunit protein uL24, found in Saccharopolyspora erythraea (strain ATCC 11635 / DSM 40517 / JCM 4748 / NBRC 13426 / NCIMB 8594 / NRRL 2338).